Consider the following 306-residue polypeptide: Pantothenate kinase (306 aa).

91-98 (GSVAVGKS) contributes to the ATP binding site.

Belongs to the prokaryotic pantothenate kinase family.

It localises to the cytoplasm. It catalyses the reaction (R)-pantothenate + ATP = (R)-4'-phosphopantothenate + ADP + H(+). Its pathway is cofactor biosynthesis; coenzyme A biosynthesis; CoA from (R)-pantothenate: step 1/5. The polypeptide is Pantothenate kinase (Streptococcus mutans serotype c (strain ATCC 700610 / UA159)).